The primary structure comprises 478 residues: Catalase easC (478 aa).

The active site involves H54. Position 343 (Y343) interacts with heme. A disordered region spans residues 459-478; sequence VAEKARPDSPSRAQPGQLRL.

This sequence belongs to the catalase family. It depends on heme as a cofactor.

Its pathway is alkaloid biosynthesis; ergot alkaloid biosynthesis. Its function is as follows. Catalase; part of the gene cluster that mediates the biosynthesis of fungal ergot alkaloid. DmaW catalyzes the first step of ergot alkaloid biosynthesis by condensing dimethylallyl diphosphate (DMAP) and tryptophan to form 4-dimethylallyl-L-tryptophan. The second step is catalyzed by the methyltransferase easF that methylates 4-dimethylallyl-L-tryptophan in the presence of S-adenosyl-L-methionine, resulting in the formation of 4-dimethylallyl-L-abrine. The catalase easC and the FAD-dependent oxidoreductase easE then transform 4-dimethylallyl-L-abrine to chanoclavine-I which is further oxidized by easD in the presence of NAD(+), resulting in the formation of chanoclavine-I aldehyde. Chanoclavine-I aldehyde is the precursor of ergoamides and ergopeptines in Clavicipitaceae, and clavine-type alcaloids such as fumiclavine in Trichocomaceae. However, the metabolites downstream of chanoclavine-I aldehyde in Arthrodermataceae have not been identified yet. This chain is Catalase easC, found in Trichophyton verrucosum (strain HKI 0517).